Here is a 295-residue protein sequence, read N- to C-terminus: MTPSTEALPTAVKAQVLAEALPWLKQLHGKIVVIKYGGNAMTDDTLRRAFAADMAFLRNCGIHPVVVHGGGPQITAMLRRLGIPGDFKGGFRVTTPEVLDVARMVLFGQVGRELVNLINAHGPYAVGITGEDAQLFTAVRRSVTVDGVTTDIGLVGDVERVNAAAVLDLIAARRIPVVSTLAPDAEGVVHNINADTAAAALAEALGAEKLLMLTDVEGLYTSWPNRDSLVSEIDTATLSQLLPTLEAGMIPKVEACLRAVSAGVPSAHVIDGRVEHCVLVELFTDAGTGTKVVSS.

Residues 70-71, Arg92, and Asn191 each bind substrate; that span reads GG.

It belongs to the acetylglutamate kinase family. ArgB subfamily.

The protein resides in the cytoplasm. It catalyses the reaction N-acetyl-L-glutamate + ATP = N-acetyl-L-glutamyl 5-phosphate + ADP. Its pathway is amino-acid biosynthesis; L-arginine biosynthesis; N(2)-acetyl-L-ornithine from L-glutamate: step 2/4. Catalyzes the ATP-dependent phosphorylation of N-acetyl-L-glutamate. The polypeptide is Acetylglutamate kinase (Mycobacterium avium (strain 104)).